We begin with the raw amino-acid sequence, 98 residues long: Large ribosomal subunit protein uL23 (98 aa).

It belongs to the universal ribosomal protein uL23 family. In terms of assembly, part of the 50S ribosomal subunit. Contacts protein L29, and trigger factor when it is bound to the ribosome.

One of the early assembly proteins it binds 23S rRNA. One of the proteins that surrounds the polypeptide exit tunnel on the outside of the ribosome. Forms the main docking site for trigger factor binding to the ribosome. This is Large ribosomal subunit protein uL23 from Marinomonas sp. (strain MWYL1).